The following is a 549-amino-acid chain: Probable protein kinase UbiB (549 aa).

Positions 123–501 constitute a Protein kinase domain; that stretch reads DFNDTPLASA…QQKSHKSNYL (379 aa). ATP is bound by residues 129–137 and Lys152; that span reads LASASISQV. Catalysis depends on Asp287, which acts as the Proton acceptor. 2 helical membrane passes run 498–518 and 519–539; these read SNYLLITSAVLLICGTILFTQ and IVTLWPAYTCIGAGILIWAIG.

The protein belongs to the ABC1 family. UbiB subfamily.

It is found in the cell inner membrane. Its pathway is cofactor biosynthesis; ubiquinone biosynthesis [regulation]. Functionally, is probably a protein kinase regulator of UbiI activity which is involved in aerobic coenzyme Q (ubiquinone) biosynthesis. The sequence is that of Probable protein kinase UbiB from Shewanella frigidimarina (strain NCIMB 400).